We begin with the raw amino-acid sequence, 142 residues long: Large ribosomal subunit protein uL13 (142 aa).

Belongs to the universal ribosomal protein uL13 family. In terms of assembly, part of the 50S ribosomal subunit.

This protein is one of the early assembly proteins of the 50S ribosomal subunit, although it is not seen to bind rRNA by itself. It is important during the early stages of 50S assembly. The protein is Large ribosomal subunit protein uL13 of Methanosphaera stadtmanae (strain ATCC 43021 / DSM 3091 / JCM 11832 / MCB-3).